Reading from the N-terminus, the 576-residue chain is Mycobactin import ATP-binding/permease protein IrtB (576 aa).

The Cytoplasmic segment spans residues 1–25; that stretch reads MIRTLIALVPADKRGTLGLYTVLTV. In terms of domain architecture, ABC transmembrane type-1 spans 19-299; that stretch reads LYTVLTVLSV…LSELTPAIES (281 aa). Residues 26 to 46 traverse the membrane as a helical segment; sequence LSVVIRAAGTVLLVPLVAALF. Residues 47–52 lie on the Periplasmic side of the membrane; sequence GDTPQD. The helical transmembrane segment at 53-73 threads the bilayer; sequence AWPWLGWLTAATAAGWIVDTT. The Cytoplasmic portion of the chain corresponds to 74–131; the sequence is TSRLGFDLGFAVLDHTQHDVADRMPNIRLDWLTAENTATARAAIASTGPELVGLVVNL. A run of 2 helical transmembrane segments spans residues 132 to 152 and 153 to 173; these read LTPL…LVAV and SPPL…AMWA. The Cytoplasmic segment spans residues 174–241; that stretch reads SNRLSRKADT…RLLAMQIPGQ (68 aa). Residues 242–262 traverse the membrane as a helical segment; the sequence is LLFSLASQLALILLAGMATWL. The Periplasmic segment spans residues 263–267; that stretch reads TVRGE. The chain crosses the membrane as a helical span at residues 268-288; that stretch reads LSVPEAVAMIVVVARYLEPFT. Topologically, residues 289 to 576 are cytoplasmic; that stretch reads SLSELTPAIE…HEAADWQITH (288 aa). Residues 332-565 form the ABC transporter domain; it reads IEFDCVTFGY…GGRFDEFWRR (234 aa). 364 to 371 serves as a coordination point for ATP; it reads GPSGSGKS.

Belongs to the ABC transporter superfamily. Siderophore-Fe(3+) uptake transporter (SIUT) (TC 3.A.1.21) family. As to quaternary structure, forms a heterodimer with IrtA.

It is found in the cell inner membrane. Its function is as follows. Part of the ABC transporter complex IrtAB involved in the import of iron-bound mycobactin (Fe-MBT) and carboxymycobactin (Fe-cMBT). Has a preference for Fe-MBT over Fe-cMBT. Transmembrane domains (TMD) form a pore in the membrane and the ATP-binding domain (NBD) is responsible for energy generation. This chain is Mycobactin import ATP-binding/permease protein IrtB, found in Mycolicibacterium smegmatis (strain ATCC 700084 / mc(2)155) (Mycobacterium smegmatis).